A 302-amino-acid polypeptide reads, in one-letter code: Putative 2-dehydro-3-deoxy-D-gluconate aldolase YagE (302 aa).

Active-site charge relay system residues include Ser-49 and Tyr-112. Tyr-138 functions as the Proton donor in the catalytic mechanism. Lys-167 acts as the Schiff-base intermediate with substrate in catalysis.

Belongs to the DapA family. In terms of assembly, a dimer of dimers.

The protein resides in the cytoplasm. It carries out the reaction 2-dehydro-3-deoxy-D-gluconate = D-glyceraldehyde + pyruvate. The enzyme catalyses 2-dehydro-3-deoxy-D-arabinonate = glycolaldehyde + pyruvate. Catalyzes the formation of 2-keto-3-deoxy-gluconate (KDG) from pyruvate and glyceraldehyde. May also function as a 2-dehydro-3-deoxy-D-pentonate aldolase. Overexpression leads to increased growth (over 2 hours) in the presence of the antibiotics norfloxacin, ampicillin and streptomycin. In Escherichia coli (strain K12), this protein is Putative 2-dehydro-3-deoxy-D-gluconate aldolase YagE (yagE).